The following is a 145-amino-acid chain: U20-hexatoxin-Hi1a (145 aa).

The signal sequence occupies residues 1 to 16; it reads MYQFLIIVILAAFVNG. Thyroglobulin type-1 domains follow at residues 20 to 73 and 82 to 145; these read KTEC…GQPM and ACEC…RLEC. 5 cysteine pairs are disulfide-bonded: C23–C45, C56–C63, C85–C106, C117–C124, and C126–C145.

As to expression, expressed by the venom gland.

Its subcellular location is the secreted. Cysteine proteinase inhibitor. In Hadronyche infensa (Fraser island funnel-web spider), this protein is U20-hexatoxin-Hi1a.